A 433-amino-acid chain; its full sequence is Histidinol dehydrogenase (433 aa).

NAD(+) contacts are provided by Y133, Q194, and N217. Residues S240, Q262, and H265 each contribute to the substrate site. Q262 and H265 together coordinate Zn(2+). Catalysis depends on proton acceptor residues E330 and H331. H331, D364, E418, and H423 together coordinate substrate. D364 lines the Zn(2+) pocket. H423 is a binding site for Zn(2+).

Belongs to the histidinol dehydrogenase family. Requires Zn(2+) as cofactor.

It carries out the reaction L-histidinol + 2 NAD(+) + H2O = L-histidine + 2 NADH + 3 H(+). It participates in amino-acid biosynthesis; L-histidine biosynthesis; L-histidine from 5-phospho-alpha-D-ribose 1-diphosphate: step 9/9. Its function is as follows. Catalyzes the sequential NAD-dependent oxidations of L-histidinol to L-histidinaldehyde and then to L-histidine. The protein is Histidinol dehydrogenase of Dechloromonas aromatica (strain RCB).